Consider the following 354-residue polypeptide: Rhodopsin (354 aa).

Residues 1–36 (MNGTEGPYFYVPMVNTTGIVRSPYEYPQYYLVSPAA) lie on the Extracellular side of the membrane. Asn2 and Asn15 each carry an N-linked (GlcNAc...) asparagine glycan. The chain crosses the membrane as a helical span at residues 37–61 (YACLGAYMFFLILVGFPVNFLTLYV). Over 62-73 (TIEHKKLRTPLN) the chain is Cytoplasmic. Residues 74-96 (YILLNLAVADLFMVFGGFTTTIY) form a helical membrane-spanning segment. The Extracellular portion of the chain corresponds to 97 to 110 (TSMHGYFVLGRLGC). Residues Cys110 and Cys187 are joined by a disulfide bond. A helical membrane pass occupies residues 111–133 (NLEGYFATLGGEIGLWSLVVLAV). A 'Ionic lock' involved in activated form stabilization motif is present at residues 134-136 (ERW). At 134–152 (ERWLVVCKPISNFRFTENH) the chain is on the cytoplasmic side. The chain crosses the membrane as a helical span at residues 153–173 (AIMGLVFTWIMANACAAPPLL). The Extracellular segment spans residues 174–202 (GWSRYIPEGMQCSCGVDYYTRAEGFNNES). A helical transmembrane segment spans residues 203-224 (FVIYMFICHFCIPLVVVFFCYG). The Cytoplasmic segment spans residues 225 to 252 (RLLCAVKEAAAAQQESETTQRAEREVTR). A helical transmembrane segment spans residues 253–274 (MVVILVIGFLVCWTPYASVAWY). Over 275-286 (IFSNQGSEFGPL) the chain is Extracellular. Residues 287 to 308 (FMTIPAFFAKSSSIYNPMIYIC) traverse the membrane as a helical segment. Lys296 carries the N6-(retinylidene)lysine modification. At 309-354 (MNKQFRHCMITTLCCGKNPFEEEEGASTTASKTEASSVSSSSVSPA) the chain is on the cytoplasmic side. S-palmitoyl cysteine attachment occurs at residues Cys322 and Cys323. The interval 333–354 (GASTTASKTEASSVSSSSVSPA) is disordered. The segment covering 334–354 (ASTTASKTEASSVSSSSVSPA) has biased composition (low complexity).

Belongs to the G-protein coupled receptor 1 family. Opsin subfamily. Post-translationally, phosphorylated on some or all of the serine and threonine residues present in the C-terminal region. In terms of processing, contains one covalently linked retinal chromophore.

The protein localises to the membrane. The protein resides in the cell projection. It localises to the cilium. It is found in the photoreceptor outer segment. In terms of biological role, photoreceptor required for image-forming vision at low light intensity. While most salt water fish species use retinal as chromophore, most freshwater fish use 3-dehydroretinal, or a mixture of retinal and 3-dehydroretinal. Light-induced isomerization of 11-cis to all-trans retinal triggers a conformational change that activates signaling via G-proteins. Subsequent receptor phosphorylation mediates displacement of the bound G-protein alpha subunit by arrestin and terminates signaling. The chain is Rhodopsin (rho) from Gambusia affinis (Western mosquitofish).